Here is a 568-residue protein sequence, read N- to C-terminus: Putative U-box domain-containing protein 55 (568 aa).

A coiled-coil region spans residues 217–464 (QSESDRNDQL…KVAAEKDAAS (248 aa)). The U-box domain maps to 496 to 568 (QPPSYFICPI…AIQEWLQRNS (73 aa)).

It catalyses the reaction S-ubiquitinyl-[E2 ubiquitin-conjugating enzyme]-L-cysteine + [acceptor protein]-L-lysine = [E2 ubiquitin-conjugating enzyme]-L-cysteine + N(6)-ubiquitinyl-[acceptor protein]-L-lysine.. Its pathway is protein modification; protein ubiquitination. Functions as an E3 ubiquitin ligase. This is Putative U-box domain-containing protein 55 (PUB55) from Arabidopsis thaliana (Mouse-ear cress).